The primary structure comprises 428 residues: Tyrosine--tRNA ligase (428 aa).

Tyr-41 provides a ligand contact to L-tyrosine. The short motif at 46–55 is the 'HIGH' region element; sequence PTADSLHLGH. L-tyrosine is bound by residues Tyr-179 and Gln-183. The 'KMSKS' region signature appears at 239–243; the sequence is KFGKT. Lys-242 lines the ATP pocket. Residues 361 to 418 enclose the S4 RNA-binding domain; it reads ADLMQALVDSELQPSRGQARKTIASNAVTINGEKQSDPEYFFQDSDILFGRYTLLRRG.

It belongs to the class-I aminoacyl-tRNA synthetase family. TyrS type 1 subfamily. As to quaternary structure, homodimer.

The protein localises to the cytoplasm. The catalysed reaction is tRNA(Tyr) + L-tyrosine + ATP = L-tyrosyl-tRNA(Tyr) + AMP + diphosphate + H(+). Its function is as follows. Catalyzes the attachment of tyrosine to tRNA(Tyr) in a two-step reaction: tyrosine is first activated by ATP to form Tyr-AMP and then transferred to the acceptor end of tRNA(Tyr). This Citrobacter koseri (strain ATCC BAA-895 / CDC 4225-83 / SGSC4696) protein is Tyrosine--tRNA ligase.